The following is a 999-amino-acid chain: Lysosomal alpha-mannosidase (999 aa).

The disordered stretch occupies residues 1-25 (MVGDARPSGVRAGGCRGAVGSRTSS). A signal peptide spans 1–50 (MVGDARPSGVRAGGCRGAVGSRTSSRALRPPLPPLSSLFVLFLAAPCAWA). The Zn(2+) site is built by His-73 and Asp-75. N-linked (GlcNAc...) asparagine glycosylation occurs at Asn-134. Position 197 (Asp-197) interacts with Zn(2+). Asp-197 acts as the Nucleophile in catalysis. A disulfide bond links Cys-269 and Cys-274. The N-linked (GlcNAc...) asparagine glycan is linked to Asn-369. His-448 contacts Zn(2+). Cys-495 and Cys-503 are joined by a disulfide. The N-linked (GlcNAc...) asparagine glycan is linked to Asn-499. The propeptide occupies 591-621 (SRDLVIQNEYLRARFDPNTGLLMELENLEQN). N-linked (GlcNAc...) asparagine glycosylation is found at Asn-634, Asn-640, Asn-681, Asn-755, and Asn-919.

This sequence belongs to the glycosyl hydrolase 38 family. In terms of assembly, homodimer. Zn(2+) serves as cofactor. Post-translationally, processed into 5 peptides of 35/38 kDa (A), 11/13 kDa (B) and 22 kDa (C), 38 kDa (D) and 13/15 kDa (E). The A, B and C peptides are disulfide-linked into a 67 kDa complex. In terms of processing, heavily glycosylated. Some sugar chains are of the high-mannose type.

It is found in the lysosome. The catalysed reaction is Hydrolysis of terminal, non-reducing alpha-D-mannose residues in alpha-D-mannosides.. Its function is as follows. Necessary for the catabolism of N-linked carbohydrates released during glycoprotein turnover. The chain is Lysosomal alpha-mannosidase (MAN2B1) from Bos taurus (Bovine).